The primary structure comprises 987 residues: Ras guanine nucleotide exchange factor efc25 (987 aa).

Residues 1 to 10 are compositionally biased toward basic and acidic residues; it reads MRRPNLDRLR. Disordered stretches follow at residues 1-50, 100-130, and 529-552; these read MRRP…STMS, FSST…PEIR, and NANT…ISRS. The segment covering 19-39 has biased composition (low complexity); that stretch reads TSVSKPSTPSYSTYSLSPTFS. Composition is skewed to polar residues over residues 40 to 50, 102 to 111, and 540 to 552; these read DKSVLSPSTMS, STHSLTRQPS, and RQTN…ISRS. At serine 552 the chain carries Phosphoserine. The 134-residue stretch at 590 to 723 folds into the N-terminal Ras-GEF domain; the sequence is SDNNVKGGTL…VILSEIDNLW (134 aa). The Ras-GEF domain maps to 752–985; it reads TPEEFASQMT…FDKSLSLEPR (234 aa).

It is found in the cytoplasm. Has a role in chromosome segregation and cell morphology upstream of the ras1-scd1 pathway. Promotes the exchange of ras1-bound GDP by GTP leading to its activation. The protein is Ras guanine nucleotide exchange factor efc25 (efc25) of Schizosaccharomyces pombe (strain 972 / ATCC 24843) (Fission yeast).